A 446-amino-acid polypeptide reads, in one-letter code: N-succinylarginine dihydrolase (446 aa).

Substrate contacts are provided by residues 19-28 (AGLSFGNVAS), asparagine 110, and 137-138 (HR). Residue glutamate 174 is part of the active site. Arginine 213 serves as a coordination point for substrate. Histidine 249 is a catalytic residue. Positions 251 and 364 each coordinate substrate. Cysteine 370 serves as the catalytic Nucleophile.

The protein belongs to the succinylarginine dihydrolase family. In terms of assembly, homodimer.

The enzyme catalyses N(2)-succinyl-L-arginine + 2 H2O + 2 H(+) = N(2)-succinyl-L-ornithine + 2 NH4(+) + CO2. The protein operates within amino-acid degradation; L-arginine degradation via AST pathway; L-glutamate and succinate from L-arginine: step 2/5. Its function is as follows. Catalyzes the hydrolysis of N(2)-succinylarginine into N(2)-succinylornithine, ammonia and CO(2). This Burkholderia thailandensis (strain ATCC 700388 / DSM 13276 / CCUG 48851 / CIP 106301 / E264) protein is N-succinylarginine dihydrolase.